We begin with the raw amino-acid sequence, 858 residues long: Elongation factor 2 (858 aa).

In terms of domain architecture, tr-type G spans 17–362 (ANIRNMSVIA…MITIHLPSPV (346 aa)). Position 26 to 33 (26 to 33 (AHVDHGKS)) interacts with GTP. A Phosphothreonine modification is found at Thr-54. Thr-57 is subject to Phosphothreonine; by EEF2K. The residue at position 59 (Thr-59) is a Phosphothreonine. Position 152 is an N6-succinyllysine (Lys-152). Residues 158–161 (NKMD) and 216–218 (SGL) contribute to the GTP site. N6-acetyllysine is present on Lys-235. Residue Lys-239 is modified to N6-acetyllysine; alternate. A Glycyl lysine isopeptide (Lys-Gly) (interchain with G-Cter in SUMO1); alternate cross-link involves residue Lys-239. The residue at position 265 (Tyr-265) is a Phosphotyrosine; by CSK. Lys-272 is subject to N6-acetyllysine; alternate. Lys-272 carries the post-translational modification N6-succinyllysine; alternate. Lys-275 is modified (N6-acetyllysine). A Glycyl lysine isopeptide (Lys-Gly) (interchain with G-Cter in SUMO) cross-link involves residue Lys-322. At Ser-325 the chain carries Phosphoserine. A Phosphotyrosine; by CSK modification is found at Tyr-373. Phosphothreonine is present on Thr-435. N6-acetyllysine occurs at positions 439 and 445. The residue at position 502 (Ser-502) is a Phosphoserine. Position 525 is an N6,N6,N6-trimethyllysine; by EEF2KMT (Lys-525). A Glycyl lysine isopeptide (Lys-Gly) (interchain with G-Cter in SUMO) cross-link involves residue Lys-529. Lys-572 bears the N6-succinyllysine mark. Ser-595 carries the post-translational modification Phosphoserine; by CDK2. At Lys-619 the chain carries N6-acetyllysine. At His-715 the chain carries Diphthamide.

Belongs to the TRAFAC class translation factor GTPase superfamily. Classic translation factor GTPase family. EF-G/EF-2 subfamily. In terms of assembly, binds to 80S ribosomes. Actively translating ribosomes show mutually exclusive binding of eIF5a (EIF5A or EIF5A2) and EEF2/eEF2. Interacts with SERBP1; interaction sequesters EEF2/eEF2 at the A-site of the ribosome, thereby blocking the interaction sites of the mRNA-tRNA complex, promoting ribosome stabilization and hibernation. Interacts with HABP4; interaction takes place at the A-site of hibernating ribosomes and promotes ribosome stabilization. Component of the mRNA surveillance SURF complex, at least composed of ERF1, ERF3 (ERF3A or ERF3B), EEF2, UPF1/RENT1, SMG1, SMG8 and SMG9. Interacts with RBPMS2. In terms of processing, phosphorylation by EF-2 kinase completely inactivates EF-2; it requires prior phosphorylation by CDK2 at Ser-595 during mitotic prometaphase. Phosphorylation by CSK promotes SUMOylation, proteolytic cleavage, and nuclear translocation if the C-terminal fragment. Post-translationally, diphthamide is 2-[3-carboxyamido-3-(trimethyl-ammonio)propyl]histidine. ISGylated. In terms of processing, proteolytically processed at two sites following phosphorylation by CSK. Post-translationally, SUMOylated following phosphorylation by CSK, promotes proteolytic cleavage.

It localises to the cytoplasm. Its subcellular location is the nucleus. It catalyses the reaction GTP + H2O = GDP + phosphate + H(+). Functionally, catalyzes the GTP-dependent ribosomal translocation step during translation elongation. During this step, the ribosome changes from the pre-translocational (PRE) to the post-translocational (POST) state as the newly formed A-site-bound peptidyl-tRNA and P-site-bound deacylated tRNA move to the P and E sites, respectively. Catalyzes the coordinated movement of the two tRNA molecules, the mRNA and conformational changes in the ribosome. This Callithrix jacchus (White-tufted-ear marmoset) protein is Elongation factor 2 (EEF2).